Consider the following 1139-residue polypeptide: DNA-directed RNA polymerase subunit beta (1139 aa).

Positions 1085–1139 are disordered; sequence ADTSNRHTPSRPTYESVTSEDLSPSPAFTRVLRTADANASRSLEEDEDEEEEEDF. The span at 1086–1106 shows a compositional bias: polar residues; the sequence is DTSNRHTPSRPTYESVTSEDL. Acidic residues predominate over residues 1128–1139; the sequence is EEDEDEEEEEDF.

It belongs to the RNA polymerase beta chain family. As to quaternary structure, in cyanobacteria the RNAP catalytic core is composed of 2 alpha, 1 beta, 1 beta', 1 gamma and 1 omega subunit. When a sigma factor is associated with the core the holoenzyme is formed, which can initiate transcription.

The enzyme catalyses RNA(n) + a ribonucleoside 5'-triphosphate = RNA(n+1) + diphosphate. In terms of biological role, DNA-dependent RNA polymerase catalyzes the transcription of DNA into RNA using the four ribonucleoside triphosphates as substrates. The polypeptide is DNA-directed RNA polymerase subunit beta (Synechococcus sp. (strain JA-2-3B'a(2-13)) (Cyanobacteria bacterium Yellowstone B-Prime)).